Consider the following 176-residue polypeptide: RNA pyrophosphohydrolase (176 aa).

One can recognise a Nudix hydrolase domain in the interval 6–149 (GYRPNVGIVI…KRDVYRRVMK (144 aa)). The Nudix box motif lies at 38 to 59 (GGINPGESAEQAMYRELFEEVG).

This sequence belongs to the Nudix hydrolase family. RppH subfamily. It depends on a divalent metal cation as a cofactor.

Accelerates the degradation of transcripts by removing pyrophosphate from the 5'-end of triphosphorylated RNA, leading to a more labile monophosphorylated state that can stimulate subsequent ribonuclease cleavage. The chain is RNA pyrophosphohydrolase from Shigella boydii serotype 4 (strain Sb227).